Here is a 511-residue protein sequence, read N- to C-terminus: Coatomer subunit delta (511 aa).

Residues 168–177 are compositionally biased toward basic and acidic residues; it reads QARRDAERQG. The interval 168–188 is disordered; sequence QARRDAERQGKKAPGFGGFGS. Phosphoserine is present on Ser-223. N6-acetyllysine occurs at positions 233 and 241. Position 244 is a phosphoserine (Ser-244). The MHD domain maps to 271 to 511; sequence MESVHMKIEE…TFLVDKYEIL (241 aa). An N6-acetyllysine mark is found at Lys-309 and Lys-351. A Phosphoserine modification is found at Ser-493.

Belongs to the adaptor complexes medium subunit family. Delta-COP subfamily. In terms of assembly, oligomeric complex that consists of at least the alpha, beta, beta', gamma, delta, epsilon and zeta subunits. In terms of tissue distribution, ubiquitously expressed.

The protein resides in the cytoplasm. It localises to the golgi apparatus membrane. Its subcellular location is the cytoplasmic vesicle. The protein localises to the COPI-coated vesicle membrane. Functionally, component of the coatomer, a cytosolic protein complex that binds to dilysine motifs and reversibly associates with Golgi non-clathrin-coated vesicles, which further mediate biosynthetic protein transport from the ER, via the Golgi up to the trans Golgi network. The coatomer complex is required for budding from Golgi membranes, and is essential for the retrograde Golgi-to-ER transport of dilysine-tagged proteins. In mammals, the coatomer can only be recruited by membranes associated to ADP-ribosylation factors (ARFs), which are small GTP-binding proteins; the complex also influences the Golgi structural integrity, as well as the processing, activity, and endocytic recycling of LDL receptors. The polypeptide is Coatomer subunit delta (ARCN1) (Homo sapiens (Human)).